The chain runs to 496 residues: RNA-binding motif protein, Y chromosome, family 1 member B (496 aa).

In terms of domain architecture, RRM spans 8-85 (GKLFIGGLNR…KAIKVEQAKK (78 aa)). Disordered stretches follow at residues 67–349 (DMNG…HRDY) and 452–496 (KDQR…SSRY). 2 stretches are compositionally biased toward low complexity: residues 97-114 (PASS…SARG) and 149-159 (PVKRGPSSRSG). The segment covering 175 to 184 (NSWMGSQGPM) has biased composition (polar residues). Basic and acidic residues-rich tracts occupy residues 204-214 (RNDRMSTRHDG), 242-253 (DNGHSNRDEHSS), 276-289 (AYRD…DESY), 313-326 (GYRD…HESY), 335-349 (SSRE…HRDY), and 484-496 (GESR…SSRY).

As to quaternary structure, interacts with splicing factor proteins SFRS3/SRP20, TRA2B/SFRS10, KHDRBS1/SAM68 and KHDRBS3. Testis-specific.

It localises to the nucleus. Functionally, RNA-binding protein which may be involved in spermatogenesis. Required for sperm development, possibly by participating in pre-mRNA splicing in the testis. The polypeptide is RNA-binding motif protein, Y chromosome, family 1 member B (RBMY1B) (Homo sapiens (Human)).